A 269-amino-acid polypeptide reads, in one-letter code: Shikimate dehydrogenase (NADP(+)) (269 aa).

Shikimate contacts are provided by residues 14-16 (SVS) and Thr-61. Lys-65 serves as the catalytic Proton acceptor. 2 residues coordinate shikimate: Asn-85 and Asp-98. NADP(+)-binding positions include 120–124 (GAGGA), 143–148 (NRTEEK), and Thr-211. Tyr-213 serves as a coordination point for shikimate. Gly-234 is a binding site for NADP(+).

Belongs to the shikimate dehydrogenase family. In terms of assembly, homodimer.

The enzyme catalyses shikimate + NADP(+) = 3-dehydroshikimate + NADPH + H(+). The protein operates within metabolic intermediate biosynthesis; chorismate biosynthesis; chorismate from D-erythrose 4-phosphate and phosphoenolpyruvate: step 4/7. Functionally, involved in the biosynthesis of the chorismate, which leads to the biosynthesis of aromatic amino acids. Catalyzes the reversible NADPH linked reduction of 3-dehydroshikimate (DHSA) to yield shikimate (SA). In Archaeoglobus fulgidus (strain ATCC 49558 / DSM 4304 / JCM 9628 / NBRC 100126 / VC-16), this protein is Shikimate dehydrogenase (NADP(+)).